Here is a 507-residue protein sequence, read N- to C-terminus: MEIKIRRRRGQIAETTVKKEVEEEEQPLSPAARLFHAPEFNCYIISVVGLKNKIEPDMIIEGIKQTLMRHPRFSSKLVNNCNNNRQEQKWVRTNVVVEDHVIIPKIQTQHIENANADVFLESYVSDLTTIPLDTSKPLWEVHLLDLKTSDAENVAVLRIHHSLGDGMSMMSLVLACTRKTSNPNELPSLPYQNRPSSGSSSLKTSSRCYSRFFWLVMVLWSAALLVLNTVCDALEFIATALFLKDTETPIKGDFKLSKGKRMCMVHRTVSLDDIKLIKNAMKMTVNDVVLGVSQAGLSQYLKRRYGEQEESKRNSSNIPKGIRLRAALLVNLRPTTGIQDLADMMTKGSKCRWGNWIGYIIFPFSIALCDDPLKHLRRAKSTIDRKKNSLEAVLTFVVGKILLNTLGVQRAANVLNRALSNTTMSFSNLVGPVEEISFYGHTVTYIAPSVYGHPHALTMHFQSYMNKLTISLTVDPTVISDPHKLCDDWEESLRSIKVVVQERTSTQ.

Over 1–211 (MEIKIRRRRG…LKTSSRCYSR (211 aa)) the chain is Cytoplasmic. His161 (proton acceptor) is an active-site residue. The helical transmembrane segment at 212–232 (FFWLVMVLWSAALLVLNTVCD) threads the bilayer. At 233 to 507 (ALEFIATALF…VVVQERTSTQ (275 aa)) the chain is on the lumenal side. 2 N-linked (GlcNAc...) asparagine glycosylation sites follow: Asn314 and Asn421.

In the N-terminal section; belongs to the long-chain O-acyltransferase family. In terms of tissue distribution, mostly expressed in flowers and siliques.

It localises to the cell membrane. Its subcellular location is the endoplasmic reticulum membrane. It carries out the reaction a long chain fatty alcohol + a fatty acyl-CoA = a wax ester + CoA. The enzyme catalyses an acyl-CoA + a 1,2-diacyl-sn-glycerol = a triacyl-sn-glycerol + CoA. It participates in glycerolipid metabolism; triacylglycerol biosynthesis. Its pathway is lipid metabolism. In terms of biological role, bifunctional wax ester synthase/diacylglycerol acyltransferase. Involved in cuticular wax biosynthesis. In Arabidopsis thaliana (Mouse-ear cress), this protein is Wax ester synthase/diacylglycerol acyltransferase 5.